Here is a 620-residue protein sequence, read N- to C-terminus: Sorbicillinoid biosynthetic cluster transcription factor 1 (620 aa).

Positions 10–37 (CEECRRRKARCDRVRPQCGICADAGRTC) form a DNA-binding region, zn(2)-C6 fungal-type. A disordered region spans residues 285 to 308 (HDDETSPNENSGSCPSVSPSTTQN). Residues 291–308 (PNENSGSCPSVSPSTTQN) show a composition bias toward polar residues.

The protein resides in the nucleus. Its function is as follows. Transcription factor that acts as the main regulator of the gene cluster that mediates the biosynthesis of sorbicillinoids, a diverse group of yellow secondary metabolites that restrict growth of competing pathogenic fungi but not of bacteria. The protein is Sorbicillinoid biosynthetic cluster transcription factor 1 of Penicillium rubens (strain ATCC 28089 / DSM 1075 / NRRL 1951 / Wisconsin 54-1255) (Penicillium chrysogenum).